The chain runs to 356 residues: Tyrosine recombinase XerS (356 aa).

The Core-binding (CB) domain occupies 16 to 121; that stretch reads TMPWYILEYY…ALSSLYKYLT (106 aa). Residues 169–354 form the Tyr recombinase domain; that stretch reads EFLQYIDTEY…VNDEQKNALD (186 aa). Residues arginine 210, lysine 234, histidine 306, arginine 309, and histidine 332 contribute to the active site. Tyrosine 341 functions as the O-(3'-phospho-DNA)-tyrosine intermediate in the catalytic mechanism.

It belongs to the 'phage' integrase family. XerS subfamily.

Its subcellular location is the cytoplasm. With respect to regulation, ftsK is required for recombination. Its function is as follows. Site-specific tyrosine recombinase, which acts by catalyzing the cutting and rejoining of the recombining DNA molecules. Essential to convert dimers of the bacterial chromosome into monomers to permit their segregation at cell division. The protein is Tyrosine recombinase XerS of Streptococcus sanguinis (strain SK36).